Reading from the N-terminus, the 1323-residue chain is Regulatory protein ADR1 (1323 aa).

Residue serine 54 is modified to Phosphoserine. C2H2-type zinc fingers lie at residues 104–126 (FVCE…YRSH) and 132–155 (YPCG…QKIH). A disordered region spans residues 175–216 (KARKNSASSVKFQTPTYGTPDNGNFLNRTTANTRRKASPEAN). Over residues 179 to 206 (NSASSVKFQTPTYGTPDNGNFLNRTTAN) the composition is skewed to polar residues. Phosphothreonine is present on residues threonine 188 and threonine 193. Serine 230 is modified (phosphoserine; by PKA; in vitro). Serine 258 is modified (phosphoserine). Threonine 259 bears the Phosphothreonine mark. A phosphoserine mark is found at serine 299, serine 323, and serine 325. At threonine 327 the chain carries Phosphothreonine.

In terms of processing, phosphorylation at Ser-230 by cAMP-dependent protein kinase A does not affect DNA binding but appears to prevent transcription of ADH2 during glucose repression.

It is found in the nucleus. Functionally, required for transcriptional activation of glucose-repressible alcohol dehydrogenase (ADH2). In Saccharomyces cerevisiae (strain ATCC 204508 / S288c) (Baker's yeast), this protein is Regulatory protein ADR1 (ADR1).